The chain runs to 222 residues: Capsular polysaccharide type 5 biosynthesis protein cap5A (222 aa).

The next 2 membrane-spanning stretches (helical) occupy residues 20 to 40 (ILII…FFVL) and 172 to 192 (VVNL…YIFF).

The protein belongs to the CpsC/CapA family.

The protein localises to the cell membrane. Required for the biosynthesis of type 5 capsular polysaccharide (Cap5/CP5). Might act as the chain-length regulator. This chain is Capsular polysaccharide type 5 biosynthesis protein cap5A (cap5A), found in Staphylococcus aureus (strain Newman).